The sequence spans 534 residues: MVVVVAAAMAAASLCCGVAAYLYYVLWLAPERLRAHLRRQGIGGPTPSFPYGNLADMRSHAAAAAGGKATGEGRQEGDIVHDYRQAVFPFYENWRKQYGPVFTYSVGNMVFLHVSRPDIVRELSLCVSLDLGKSSYMKATHQPLFGEGILKSNGNAWAHQRKLIAPEFFPDKVKGMVDLMVDSAQVLVSSWEDRIDRSGGNALDLMIDDDIRAYSADVISRTCFGSSYVKGKQIFDMIRELQKTVSTKKQNLLAEMTGLSFLFPKASGRAAWRLNGRVRALILDLVGENGEEDGGNLLSAMLRSARGGGGGGGEVAAAAEDFVVDNCKNIYFAGYESTAVTAAWCLMLLALHPEWQDRVRDEVQAACCGGGGRSPDFPALQKMKNLTMVIQETLRLYPAGAVVSRQALRELSLGGVRVPRGVNIYVPVSTLHLDAELWGGGAGAAEFDPARFADARPPLHAYLPFGAGARTCLGQTFAMAELKVLLSLVLCRFEVALSPEYVHSPAHKLIVEAEHGVRLVLKKVRSKCDWAGFD.

M1 is a topological domain (lumenal). The helical; Signal-anchor for type III membrane protein transmembrane segment at 2–22 threads the bilayer; that stretch reads VVVVAAAMAAASLCCGVAAYL. The Cytoplasmic segment spans residues 23–534; the sequence is YYVLWLAPER…RSKCDWAGFD (512 aa). Residue C472 participates in heme binding.

Belongs to the cytochrome P450 family. Heme serves as cofactor. As to expression, highly expressed in spikelet and uppermost internode. Detected in shoots, roots, leaves and anthers.

Its subcellular location is the membrane. In terms of biological role, catalyzes the 13-hydroxylation of gibberellins (GAs). Determines the ratio of GA4 and GA1. Converts GA12 into GA53. The polypeptide is Cytochrome P450 714B1 (CYP714B1) (Oryza sativa subsp. japonica (Rice)).